An 82-amino-acid chain; its full sequence is Small ribosomal subunit protein eS21z (82 aa).

An N-acetylmethionine modification is found at Met1.

It belongs to the eukaryotic ribosomal protein eS21 family.

The polypeptide is Small ribosomal subunit protein eS21z (RPS21B) (Arabidopsis thaliana (Mouse-ear cress)).